An 834-amino-acid chain; its full sequence is Periplasmic nitrate reductase (834 aa).

The tat-type signal signal peptide spans 1–29; it reads MNLTRREFAKANAAAIAAAAAGLPILVRA. The region spanning 41-97 is the 4Fe-4S Mo/W bis-MGD-type domain; it reads LVWNKAPCRFCGTGCSVMVATRDGQVVATHGDIKAEVNRGINCVKGYFLSKIMYGSD. Positions 48, 51, 55, and 83 each coordinate [4Fe-4S] cluster. Mo-bis(molybdopterin guanine dinucleotide) is bound by residues Lys-85, Gln-152, Asn-177, Cys-181, 214 to 221, 245 to 249, 264 to 266, Met-375, Gln-379, Asn-485, 511 to 512, Lys-534, Asp-561, and 721 to 730; these read WGSNMAEM, STFEH, QTD, SD, and TGRVLEHWHT. Phe-797 contributes to the substrate binding site. The Mo-bis(molybdopterin guanine dinucleotide) site is built by Asn-805 and Lys-822.

This sequence belongs to the prokaryotic molybdopterin-containing oxidoreductase family. NasA/NapA/NarB subfamily. Component of the periplasmic nitrate reductase NapAB complex composed of NapA and NapB. [4Fe-4S] cluster is required as a cofactor. Mo-bis(molybdopterin guanine dinucleotide) serves as cofactor. Post-translationally, predicted to be exported by the Tat system. The position of the signal peptide cleavage has not been experimentally proven.

It localises to the periplasm. The enzyme catalyses 2 Fe(II)-[cytochrome] + nitrate + 2 H(+) = 2 Fe(III)-[cytochrome] + nitrite + H2O. In terms of biological role, catalytic subunit of the periplasmic nitrate reductase complex NapAB. Receives electrons from NapB and catalyzes the reduction of nitrate to nitrite. In Pseudomonas aeruginosa (strain UCBPP-PA14), this protein is Periplasmic nitrate reductase.